The following is a 123-amino-acid chain: Small ribosomal subunit protein uS12 (123 aa).

At Asp-89 the chain carries 3-methylthioaspartic acid. The disordered stretch occupies residues 104-123 (TAGVKDRKQARSKYGAKRPK). The segment covering 113–123 (ARSKYGAKRPK) has biased composition (basic residues).

Belongs to the universal ribosomal protein uS12 family. As to quaternary structure, part of the 30S ribosomal subunit. Contacts proteins S8 and S17. May interact with IF1 in the 30S initiation complex.

Its function is as follows. With S4 and S5 plays an important role in translational accuracy. Functionally, interacts with and stabilizes bases of the 16S rRNA that are involved in tRNA selection in the A site and with the mRNA backbone. Located at the interface of the 30S and 50S subunits, it traverses the body of the 30S subunit contacting proteins on the other side and probably holding the rRNA structure together. The combined cluster of proteins S8, S12 and S17 appears to hold together the shoulder and platform of the 30S subunit. This chain is Small ribosomal subunit protein uS12, found in Neisseria meningitidis serogroup C (strain 053442).